The primary structure comprises 336 residues: tRNA-cytidine(32) 2-sulfurtransferase (336 aa).

A disordered region spans residues Met-1 to Glu-42. A PP-loop motif motif is present at residues Ser-75 to Ser-80. [4Fe-4S] cluster-binding residues include Cys-150, Cys-153, and Cys-241. The segment at Pro-301–Val-328 is disordered. Residues Asp-315–Val-328 are compositionally biased toward polar residues.

Belongs to the TtcA family. Homodimer. Requires Mg(2+) as cofactor. [4Fe-4S] cluster is required as a cofactor.

It is found in the cytoplasm. It carries out the reaction cytidine(32) in tRNA + S-sulfanyl-L-cysteinyl-[cysteine desulfurase] + AH2 + ATP = 2-thiocytidine(32) in tRNA + L-cysteinyl-[cysteine desulfurase] + A + AMP + diphosphate + H(+). Its pathway is tRNA modification. Its function is as follows. Catalyzes the ATP-dependent 2-thiolation of cytidine in position 32 of tRNA, to form 2-thiocytidine (s(2)C32). The sulfur atoms are provided by the cysteine/cysteine desulfurase (IscS) system. The chain is tRNA-cytidine(32) 2-sulfurtransferase from Paraburkholderia phymatum (strain DSM 17167 / CIP 108236 / LMG 21445 / STM815) (Burkholderia phymatum).